The sequence spans 256 residues: Acetylglutamate kinase (256 aa).

Substrate contacts are provided by residues 40–41 (GG), arginine 62, and asparagine 153.

It belongs to the acetylglutamate kinase family. ArgB subfamily.

The protein localises to the cytoplasm. It catalyses the reaction N-acetyl-L-glutamate + ATP = N-acetyl-L-glutamyl 5-phosphate + ADP. It functions in the pathway amino-acid biosynthesis; L-arginine biosynthesis; N(2)-acetyl-L-ornithine from L-glutamate: step 2/4. In terms of biological role, catalyzes the ATP-dependent phosphorylation of N-acetyl-L-glutamate. The chain is Acetylglutamate kinase from Bacillus cytotoxicus (strain DSM 22905 / CIP 110041 / 391-98 / NVH 391-98).